Consider the following 351-residue polypeptide: Beta-1,4-xylosyltransferase IRX9 (351 aa).

The Cytoplasmic portion of the chain corresponds to 1–16; the sequence is MGSLERSKKKAQVWKK. Residues 17–36 traverse the membrane as a helical; Signal-anchor for type II membrane protein segment; sequence AVIHFSLCFVMGFFTGFAPA. Residues 37-351 are Lumenal-facing; the sequence is GKASFFSNFE…KFPTRTRLST (315 aa). Residues asparagine 64 and asparagine 74 are each glycosylated (N-linked (GlcNAc...) asparagine). Positions 80 to 107 are disordered; sequence SQSQAPAPAESREAEGETRSLSEKEDEN. Positions 89–107 are enriched in basic and acidic residues; it reads ESREAEGETRSLSEKEDEN. Asparagine 271 and asparagine 287 each carry an N-linked (GlcNAc...) asparagine glycan.

The protein belongs to the glycosyltransferase 43 family. In terms of tissue distribution, expressed in developing interfascicular fibers, primary and secondary xylem in stems and developing secondary xylem in roots.

The protein localises to the golgi apparatus membrane. The enzyme catalyses [(1-&gt;4)-beta-D-xylan](n) + UDP-alpha-D-xylose = [(1-&gt;4)-beta-D-xylan](n+1) + UDP + H(+). Its function is as follows. Involved in the synthesis of the hemicellulose glucuronoxylan, a major component of secondary cell walls. Xylan xylosyltransferase that acts cooperatively with IRX14 to achieve the successive addition of xylosyl residues during xylan backbone elongation. This Arabidopsis thaliana (Mouse-ear cress) protein is Beta-1,4-xylosyltransferase IRX9.